The sequence spans 410 residues: Interleukin-1 receptor type 2 (410 aa).

The signal sequence occupies residues 1-13; the sequence is MFILLVLVTGVSA. The Extracellular segment spans residues 14 to 355; that stretch reads FTTPTVVHTG…SQSLHTTVKE (342 aa). Ig-like C2-type domains follow at residues 35-136, 146-237, and 249-357; these read PTVH…VELK, PHVS…RNIE, and PVII…KEVS. 3 cysteine pairs are disulfide-bonded: C42-C128, C64-C120, and C164-C219. 4 N-linked (GlcNAc...) asparagine glycosylation sites follow: N124, N208, N231, and N289. A disulfide bridge connects residues C270 and C338. Residues 356–381 traverse the membrane as a helical segment; the sequence is VSSTFSWSIALAPLSLIILVVGAIWM. At 382-410 the chain is on the cytoplasmic side; it reads RRRCKRRAGKTYGLTKLRTDNQDFPSSPN.

Belongs to the interleukin-1 receptor family. As to quaternary structure, associates with IL1RAP to form a non-signaling interleukin-1 receptor complex. In terms of processing, a soluble form (sIL1R2) can also be produced by proteolytic cleavage at the cell surface (shedding) involving a metalloproteinase. As to expression, strongly expressed in B-cells, with levels 21 times higher than IL1R1. In T-cells expressed 5 times more compared with IL1R1.

The protein localises to the membrane. The protein resides in the cell membrane. Its subcellular location is the secreted. Non-signaling receptor for IL1A, IL1B and IL1RN. Reduces IL1B activities. Serves as a decoy receptor by competitive binding to IL1B and preventing its binding to IL1R1. Also modulates cellular response through non-signaling association with IL1RAP after binding to IL1B. IL1R2 (membrane and secreted forms) preferentially binds IL1B and poorly IL1A and IL1RN. The secreted IL1R2 recruits secreted IL1RAP with high affinity; this complex formation may be the dominant mechanism for neutralization of IL1B by secreted/soluble receptors. In Mus musculus (Mouse), this protein is Interleukin-1 receptor type 2 (Il1r2).